The primary structure comprises 427 residues: Trigger factor (427 aa).

The region spanning 163–248 is the PPIase FKBP-type domain; the sequence is GDTVVIDFVG…IHEVKTKEVP (86 aa).

Belongs to the FKBP-type PPIase family. Tig subfamily.

Its subcellular location is the cytoplasm. It carries out the reaction [protein]-peptidylproline (omega=180) = [protein]-peptidylproline (omega=0). Involved in protein export. Acts as a chaperone by maintaining the newly synthesized protein in an open conformation. Functions as a peptidyl-prolyl cis-trans isomerase. This is Trigger factor from Streptococcus agalactiae serotype III (strain NEM316).